A 265-amino-acid polypeptide reads, in one-letter code: Anaphase-promoting complex subunit 9 (265 aa).

In terms of assembly, the APC/C is composed of at least 13 subunits that stay tightly associated throughout the cell cycle: APC1, APC2, APC4, APC5, APC9, APC11, CDC16, CDC23, CDC26, CDC27, DOC1, MND2 and SWM1.

Its subcellular location is the cytoplasm. It is found in the nucleus. It participates in protein modification; protein ubiquitination. In terms of biological role, component of the anaphase promoting complex/cyclosome (APC/C), a cell cycle-regulated E3 ubiquitin-protein ligase complex that controls progression through mitosis and the G1 phase of the cell cycle. The APC/C is thought to confer substrate specificity and, in the presence of ubiquitin-conjugating E2 enzymes, it catalyzes the formation of protein-ubiquitin conjugates that are subsequently degraded by the 26S proteasome. In early mitosis, the APC/C is activated by CDC20 and targets securin PDS1, the B-type cyclin CLB5, and other anaphase inhibitory proteins for proteolysis, thereby triggering the separation of sister chromatids at the metaphase-to-anaphase transition. In late mitosis and in G1, degradation of CLB5 allows activation of the APC/C by CDH1, which is needed to destroy CDC20 and the B-type cyclin CLB2 to allow exit from mitosis and creating the low CDK state necessary for cytokinesis and for reforming prereplicative complexes in G1 prior to another round of replication. This is Anaphase-promoting complex subunit 9 (APC9) from Saccharomyces cerevisiae (strain ATCC 204508 / S288c) (Baker's yeast).